Reading from the N-terminus, the 624-residue chain is ERAD-associated E3 ubiquitin-protein ligase ASI1 (624 aa).

Topologically, residues 1–69 (MNSSTSSENV…SEEIPPTLRS (69 aa)) are perinuclear space. 3 N-linked (GlcNAc...) asparagine glycosylation sites follow: N2, N19, and N29. The helical transmembrane segment at 70–90 (VFDTIGFFFSPYAIFCFVIAI) threads the bilayer. The Nuclear segment spans residues 91–116 (VLNRFVVFYAVLNNGSRRTLPLWLSN). The chain crosses the membrane as a helical span at residues 117-137 (VFHVSAVVVLAMVSLGPLTLG). Residues 138-152 (KDFKILGDPAFAQEK) are Perinuclear space-facing. Residues 153 to 173 (FLLNIFYAFAYSYCVETIFTI) form a helical membrane-spanning segment. The Nuclear segment spans residues 174 to 209 (MRNSSPLEGTDYSLFELSIQFYTMTNNNTKFLDSPD). The chain crosses the membrane as a helical span at residues 210–230 (YIIDCSMAILSRILIHLVEIF). Residues 231–273 (RLRNYRLLFSTIMNLCHICYLGIRVKQGGWKSLPFSVKFRHFP) are Perinuclear space-facing. A helical transmembrane segment spans residues 274–294 (KLFSVSIICLSLLIFKLSCLI). Residues 295–624 (RWDPFGKSRN…CKVHPVSDSK (330 aa)) are Nuclear-facing. Positions 467–490 (TSDDEYSEDYEPSEVESLGDSDEE) are disordered. Positions 468-490 (SDDEYSEDYEPSEVESLGDSDEE) are enriched in acidic residues. The segment at 568-608 (CAVCKVNERNTVLWPCRCFAICEDCRISLGLRGFSTCVCCR) adopts an RING-type; atypical zinc-finger fold.

In terms of assembly, component of the Asi complex, which contains ASI1, ASI2 and ASI3. Interacts directly with ASI3. Post-translationally, glycosylation is not required for ASI1 function.

It is found in the nucleus inner membrane. The enzyme catalyses S-ubiquitinyl-[E2 ubiquitin-conjugating enzyme]-L-cysteine + [acceptor protein]-L-lysine = [E2 ubiquitin-conjugating enzyme]-L-cysteine + N(6)-ubiquitinyl-[acceptor protein]-L-lysine.. Functionally, E3 ubiquitin-protein ligase which transfers ubiquitin to substrates promoting their degradation. Part of the nuclear inner membrane (INM)-specific branch of the ER-associated degradation (ERAD) pathway, required for the elimination of misfolded proteins in the INM, a specialized ER subdomain. Required for ERG11 degradation. Negative regulator of SPS-sensor signaling. Together with ASI2 and ASI3, prevents the unprocessed precursor forms of STP1 and STP2 that escape cytoplasmic anchoring from inducing SPS-sensor-regulated genes in the absence of inducing signals. Controls amino acid permease (AAP) gene expression in response to amino acid availability, a process mediated by the transcription factors STP1 and STP1. The polypeptide is ERAD-associated E3 ubiquitin-protein ligase ASI1 (ASI1) (Saccharomyces cerevisiae (strain ATCC 204508 / S288c) (Baker's yeast)).